Here is a 125-residue protein sequence, read N- to C-terminus: Classical arabinogalactan protein 27 (125 aa).

Positions 1–21 (MASSILLTLITFIFLSSLSLS) are cleaved as a signal peptide. Residues 20 to 36 (LSSPTTNTIPSSQTISP) show a composition bias toward low complexity. A disordered region spans residues 20 to 95 (LSSPTTNTIP…ASPPASSLAS (76 aa)). Positions 53–66 (AVSSTQTIPSSSTL) are enriched in polar residues. The span at 77–95 (DPDPAFAPSASPPASSLAS) shows a compositional bias: low complexity. The GPI-anchor amidated serine moiety is linked to residue Ser98. Residues 99 to 125 (QAPGVFIYFVFAAVYCFSLRLLAVSAI) constitute a propeptide, removed in mature form.

The protein belongs to the classical AGP family. Post-translationally, O-glycosylated on the hydroxyproline residues.

It localises to the cell membrane. Functionally, proteoglycan that seems to be implicated in diverse developmental roles such as differentiation, cell-cell recognition, embryogenesis and programmed cell death. In Arabidopsis thaliana (Mouse-ear cress), this protein is Classical arabinogalactan protein 27 (AGP27).